Here is a 210-residue protein sequence, read N- to C-terminus: Putative cutinase (210 aa).

The segment covering 26-38 has biased composition (basic and acidic residues); the sequence is DSERLPLKRDEPG. A disordered region spans residues 26–58; it reads DSERLPLKRDEPGSRSMRSTFIPSSQCSNLSSA. A compositionally biased stretch (low complexity) spans 49–58; the sequence is SSQCSNLSSA.

It carries out the reaction cutin + H2O = cutin monomers.. This is Putative cutinase from Phytophthora capsici.